We begin with the raw amino-acid sequence, 439 residues long: Nuclear distribution protein PAC1 (439 aa).

Residues 55 to 90 are a coiled coil; the sequence is NSIVRLQSKIMELEKNCEELQKSIDEQQSSTNQISN. WD repeat units follow at residues 106 to 145, 149 to 193, 199 to 240, 243 to 282, 295 to 335, 355 to 392, and 402 to 438; these read TLDA…LPLQ, AHMD…TLSH, GHEH…CIKS, PHTQ…SMGI, IPDP…FIPH, DHNS…LSTT, and NKGF…TSFM.

It belongs to the WD repeat LIS1/nudF family. Self-associates. Interacts with NDL1 and dynein.

It is found in the cytoplasm. The protein localises to the cytoskeleton. The protein resides in the spindle pole. Functionally, positively regulates the activity of the minus-end directed microtubule motor protein dynein. Plays a central role in positioning the mitotic spindle at the bud neck during cell division. Targets cytoplasmic dynein to microtubule plus ends, thereby promoting dynein-mediated microtubule sliding along the bud cortex and consequently the movement of the mitotic spindle to the bud neck. The sequence is that of Nuclear distribution protein PAC1 from Kluyveromyces lactis (strain ATCC 8585 / CBS 2359 / DSM 70799 / NBRC 1267 / NRRL Y-1140 / WM37) (Yeast).